A 217-amino-acid polypeptide reads, in one-letter code: Flagellin B2 (217 aa).

A propeptide spanning residues methionine 1 to glycine 12 is cleaved from the precursor.

This sequence belongs to the archaeal flagellin family.

Its subcellular location is the archaeal flagellum. Functionally, flagellin is the subunit protein which polymerizes to form the filaments of archaeal flagella. In Methanocaldococcus jannaschii (strain ATCC 43067 / DSM 2661 / JAL-1 / JCM 10045 / NBRC 100440) (Methanococcus jannaschii), this protein is Flagellin B2 (flaB2).